Consider the following 297-residue polypeptide: Bifunctional protein FolD 1 (297 aa).

NADP(+)-binding positions include glycine 164–serine 166, serine 193, and isoleucine 234.

This sequence belongs to the tetrahydrofolate dehydrogenase/cyclohydrolase family. In terms of assembly, homodimer.

It catalyses the reaction (6R)-5,10-methylene-5,6,7,8-tetrahydrofolate + NADP(+) = (6R)-5,10-methenyltetrahydrofolate + NADPH. It carries out the reaction (6R)-5,10-methenyltetrahydrofolate + H2O = (6R)-10-formyltetrahydrofolate + H(+). The protein operates within one-carbon metabolism; tetrahydrofolate interconversion. Its function is as follows. Catalyzes the oxidation of 5,10-methylenetetrahydrofolate to 5,10-methenyltetrahydrofolate and then the hydrolysis of 5,10-methenyltetrahydrofolate to 10-formyltetrahydrofolate. The polypeptide is Bifunctional protein FolD 1 (Haloarcula marismortui (strain ATCC 43049 / DSM 3752 / JCM 8966 / VKM B-1809) (Halobacterium marismortui)).